The sequence spans 141 residues: uncharacterized protein (141 aa).

Transmembrane regions (helical) follow at residues 7 to 24 (YRIP…FLSP), 39 to 56 (FLKF…HRGI), 69 to 91 (FYLI…ILGF), and 116 to 138 (FFIL…SSFI).

Its subcellular location is the cell membrane. This is an uncharacterized protein from Aquifex aeolicus (strain VF5).